The sequence spans 186 residues: Threonylcarbamoyl-AMP synthase (186 aa).

Residues 2-186 (VSNLQQVVKA…ARTEQLLRQG (185 aa)) form the YrdC-like domain.

This sequence belongs to the SUA5 family. TsaC subfamily.

The protein localises to the cytoplasm. The enzyme catalyses L-threonine + hydrogencarbonate + ATP = L-threonylcarbamoyladenylate + diphosphate + H2O. Functionally, required for the formation of a threonylcarbamoyl group on adenosine at position 37 (t(6)A37) in tRNAs that read codons beginning with adenine. Catalyzes the conversion of L-threonine, HCO(3)(-)/CO(2) and ATP to give threonylcarbamoyl-AMP (TC-AMP) as the acyladenylate intermediate, with the release of diphosphate. This chain is Threonylcarbamoyl-AMP synthase, found in Vibrio vulnificus (strain CMCP6).